A 912-amino-acid polypeptide reads, in one-letter code: MAAEKGESSDEERKPLTRDSMEYRDSSNSLHYSSSAASLSLAVIDRINGSTHDTGPNEIGRGDRDYSDDGEYDLEEADYIPSGGKPVQKKVKIVLGFLLFLCLSGWSLSFVLFLFGGHESSKTSNVYDDNISDTGSQGNKITLDEVLDGTWSPAFHDISWIPGPNGEDGLLLERGASISNGYLRVEDIVSRKDPKSSKKPIVLMQKAYFNVSGEAVFPSRVWPSPDLKTVLVLSNEEKNWRHSFTGKYWLFDVESQTGQPLDPAAKDQRVQLASWSPRSDAVVFTRDNNMFLRKLSSNEVMKITTNGGVNLFYGVPDWVYEEEVYSGNSVTWWADDGEYIAFLRTNESSVPEYPVQYFVSLPNGEISKPGEESYPETRKIKYPKAGAPNPIVDLQFFDVGKDEVFSVDIKGDFADSNRLITEVVWASNGKVIVRSTNRESDVLHVAVIDVLSRTGKIVRKEDINALDGGWVEPSQTARFIPADPDNGRLNDGYIDTVIYEGRDQLAYYTPVDNPNPIVLTKGHSEVVQAPSGVDLKRGLVYFVVAGNEPWERHIYSVNFDGTSIQPVTNVSESSYYDVSFSNGAGYAFLKYAGPQVPWQKVISTPANEVTFEETIEENNRLSERLRQYTLESKIYQYIDIDGFSLPVLERRPPNFNQTKKYPVLFYLYGGPGSQTVNKKFNVDFQSYVAANLGYIVVTVDGRGTGFIGRKARCVIRGNLGHFESRDQIQAAKIWAAKPYVDESRISIWGWSYGGFMALKTIEQDGGRTFKYGIAVAPVTDWRYYDSIYTERYMHTPQRNPGGYDNAAISNTTALANNIRFLVMHGTADDNVHIQNSLTFIDKLDVNNVHNYDVHFFPDSDHSIYFHNAHKIVYSRLADWLVNAFNGEWLKTYNPAPNDSIFRRAAIWVGLSI.

Basic and acidic residues predominate over residues Met-1–Asp-25. Disordered stretches follow at residues Met-1–His-31 and Gly-49–Gly-70. At Met-1–Lys-92 the chain is on the cytoplasmic side. Residues Ile-93–Phe-113 form a helical; Signal-anchor for type II membrane protein membrane-spanning segment. Residues Leu-114–Ile-912 are Vacuolar-facing. N-linked (GlcNAc...) asparagine glycans are attached at residues Asn-130, Asn-210, Asn-346, Asn-569, and Asn-656. The Charge relay system role is filled by Ser-751. Residue Asn-810 is glycosylated (N-linked (GlcNAc...) asparagine). Active-site charge relay system residues include Asp-828 and His-861. Asn-897 carries an N-linked (GlcNAc...) asparagine glycan.

Belongs to the peptidase S9B family.

Its subcellular location is the vacuole membrane. It carries out the reaction Release of an N-terminal dipeptide, Xaa-Yaa-|-Zaa-, from a polypeptide, preferentially when Yaa is Pro, provided Zaa is neither Pro nor hydroxyproline.. Functionally, type IV dipeptidyl-peptidase which removes N-terminal dipeptides sequentially from polypeptides having unsubstituted N-termini provided that the penultimate residue is proline. This Paracoccidioides lutzii (strain ATCC MYA-826 / Pb01) (Paracoccidioides brasiliensis) protein is Probable dipeptidyl-aminopeptidase B (DAPB).